The following is a 422-amino-acid chain: Synaptotagmin-15 (422 aa).

Topologically, residues 1-4 (MAEQ) are extracellular. A helical; Signal-anchor for type III membrane protein transmembrane segment spans residues 5–27 (LALVIGCIIGGLLLLIGISCCLW). Over 28 to 422 (KRLCTTFTYE…WHALCRPMEP (395 aa)) the chain is Cytoplasmic. 2 consecutive C2 domains span residues 148-267 (CLGR…VIWR) and 279-400 (EFGD…EHWN).

Belongs to the synaptotagmin family. In terms of assembly, homodimer.

It localises to the membrane. In terms of biological role, may be involved in the trafficking and exocytosis of secretory vesicles in non-neuronal tissues. The sequence is that of Synaptotagmin-15 (Syt15) from Rattus norvegicus (Rat).